Here is a 182-residue protein sequence, read N- to C-terminus: Large ribosomal subunit protein bL17 (182 aa).

Residues 126–182 (ERANRVAASKAKKAEAEAAEAKAEEAEEAPEVEADTATDKAAEAEAAEAADEAAEDK) are disordered. Over residues 137–149 (KKAEAEAAEAKAE) the composition is skewed to basic and acidic residues. 2 stretches are compositionally biased toward acidic residues: residues 150–161 (EAEEAPEVEADT) and 170–182 (EAAEAADEAAEDK).

It belongs to the bacterial ribosomal protein bL17 family. As to quaternary structure, part of the 50S ribosomal subunit. Contacts protein L32.

The polypeptide is Large ribosomal subunit protein bL17 (Corynebacterium jeikeium (strain K411)).